Consider the following 335-residue polypeptide: Lipase chaperone (335 aa).

The chain crosses the membrane as a helical span at residues 1–21; that stretch reads MSGSILLLPLAIALGLGFFIA.

Belongs to the lipase chaperone family.

The protein resides in the cell inner membrane. In terms of biological role, may be involved in the folding of the extracellular lipase during its passage through the periplasm. In Stutzerimonas stutzeri (strain A1501) (Pseudomonas stutzeri), this protein is Lipase chaperone.